Consider the following 509-residue polypeptide: 3-isopropylmalate dehydratase large subunit, chloroplastic (509 aa).

The span at 1–24 (MASVISSSPFLCKSSSKSDLGISS) shows a compositional bias: low complexity. The interval 1 to 25 (MASVISSSPFLCKSSSKSDLGISSF) is disordered. The N-terminal 47 residues, 1 to 47 (MASVISSSPFLCKSSSKSDLGISSFPKSSQISIHRCQKKSISRKIVS), are a transit peptide targeting the chloroplast. Positions 376, 445, and 448 each coordinate [4Fe-4S] cluster.

Belongs to the aconitase/IPM isomerase family. Heterodimer of the large LEUC/IIL1 subunit and the small LEUD (SSU1, SSU2 or SSU3) subunits. It depends on [4Fe-4S] cluster as a cofactor. As to expression, expressed in roots, leaves, stems and flowers. Expressed at low levels in siliques.

Its subcellular location is the plastid. The protein localises to the chloroplast stroma. It catalyses the reaction (2R,3S)-3-isopropylmalate = (2S)-2-isopropylmalate. The catalysed reaction is a 2-(omega-methylsulfanyl)alkylmalate = a 2-(omega-methylsulfanyl)alkylmaleate + H2O. The enzyme catalyses 2-(3-methylsulfanyl)propylmalate = 2-(2-methylsulfanyl)propylmaleate + H2O. It carries out the reaction a 3-(omega-methylsulfanyl)alkylmalate = a 2-(omega-methylsulfanyl)alkylmaleate + H2O. It catalyses the reaction 2-(2-methylsulfanyl)ethylmalate = 2-(2-methylsulfanyl)ethylmaleate + H2O. The catalysed reaction is 3-(2-methylsulfanyl)ethylmalate = 2-(2-methylsulfanyl)ethylmaleate + H2O. The enzyme catalyses 3-(3-methylsulfanyl)propylmalate = 2-(2-methylsulfanyl)propylmaleate + H2O. It functions in the pathway amino-acid biosynthesis; L-leucine biosynthesis; L-leucine from 3-methyl-2-oxobutanoate: step 2/4. Catalyzes the isomerization between 2-isopropylmalate and 3-isopropylmalate, via the formation of 2-isopropylmaleate. Functions in both the biosynthesis of leucine and in the methionine chain elongation pathway of aliphatic glucosinolate formation. The chain is 3-isopropylmalate dehydratase large subunit, chloroplastic from Arabidopsis thaliana (Mouse-ear cress).